The sequence spans 249 residues: MVLRRDFLTWCNETLQTALFKDYAPNGLQVEGREYIGKIVTSVTASRAAIDFAVEQKADLLLVHHGMFWKNELPTVTGWKKERIAALLRHDINMAGYHLPLDAHPTLGNNAQLADRLGFATEKRFGEQNLLNSGSLKQAKTLGALAAHIETVLQRKPVVIGKPEREIRRVAWCSGGAQGFFQTAIDEGVDLYLTGEISEAQYHLANETGTAFISAGHHATERYGVRALAESAAEVFGLEVCHFDENNPA.

5 residues coordinate a divalent metal cation: His-64, His-65, Asp-102, His-217, and Glu-221.

Belongs to the GTP cyclohydrolase I type 2/NIF3 family. Homohexamer.

The sequence is that of GTP cyclohydrolase 1 type 2 homolog from Neisseria meningitidis serogroup A / serotype 4A (strain DSM 15465 / Z2491).